A 148-amino-acid chain; its full sequence is UPF0756 membrane protein YeaL (148 aa).

Helical transmembrane passes span 14-34 (ALGF…LIIV), 51-71 (LSIG…SGTL), 86-106 (LVAI…VTLM), and 121-141 (VLGV…AGLV).

The protein belongs to the UPF0756 family.

It is found in the cell membrane. The chain is UPF0756 membrane protein YeaL from Shigella boydii serotype 18 (strain CDC 3083-94 / BS512).